The chain runs to 182 residues: Isopentenyl-diphosphate Delta-isomerase (182 aa).

Residues His-25 and His-32 each contribute to the Mn(2+) site. Positions 30–164 (LLHLAFSSWL…PWAFSPWMVM (135 aa)) constitute a Nudix hydrolase domain. Cys-67 is a catalytic residue. Residue His-69 participates in Mn(2+) binding. Glu-87 is a Mg(2+) binding site. Mn(2+) is bound by residues Glu-114 and Glu-116. Glu-116 is a catalytic residue.

Belongs to the IPP isomerase type 1 family. In terms of assembly, homodimer. Mg(2+) serves as cofactor. It depends on Mn(2+) as a cofactor.

Its subcellular location is the cytoplasm. The catalysed reaction is isopentenyl diphosphate = dimethylallyl diphosphate. Its pathway is isoprenoid biosynthesis; dimethylallyl diphosphate biosynthesis; dimethylallyl diphosphate from isopentenyl diphosphate: step 1/1. Its function is as follows. Catalyzes the 1,3-allylic rearrangement of the homoallylic substrate isopentenyl (IPP) to its highly electrophilic allylic isomer, dimethylallyl diphosphate (DMAPP). In Escherichia coli O45:K1 (strain S88 / ExPEC), this protein is Isopentenyl-diphosphate Delta-isomerase.